Here is a 303-residue protein sequence, read N- to C-terminus: Small ribosomal subunit protein bS1m (303 aa).

Ser2 is modified (N-acetylserine). A mitochondrion; not cleaved-targeting transit peptide spans 2–13; it reads SFAQILRGSRAM.

It belongs to the bacterial ribosomal protein bS1 family. Component of the mitochondrial small ribosomal subunit (mt-SSU). Mature yeast 74S mitochondrial ribosomes consist of a small (37S) and a large (54S) subunit. The 37S small subunit contains a 15S ribosomal RNA (15S mt-rRNA) and at least 32 different proteins. The 54S large subunit contains a 21S rRNA (21S mt-rRNA) and at least 45 different proteins. This subunit is mutually exclusive with mug178/small ribosomal subunit protein L51-b.

The protein localises to the mitochondrion. In terms of biological role, component of the mitochondrial ribosome (mitoribosome), a dedicated translation machinery responsible for the synthesis of mitochondrial genome-encoded proteins, including at least some of the essential transmembrane subunits of the mitochondrial respiratory chain. The mitoribosomes are attached to the mitochondrial inner membrane and translation products are cotranslationally integrated into the membrane. bS1m functionally interacts with the 5'-UTR of mitochondrial mRNAs. Plays an essential role in mitochondrial translation. The sequence is that of Small ribosomal subunit protein bS1m (mrp51) from Schizosaccharomyces pombe (strain 972 / ATCC 24843) (Fission yeast).